Consider the following 344-residue polypeptide: UDP-3-O-acylglucosamine N-acyltransferase (344 aa).

The Proton acceptor role is filled by H248.

This sequence belongs to the transferase hexapeptide repeat family. LpxD subfamily. Homotrimer.

The catalysed reaction is a UDP-3-O-[(3R)-3-hydroxyacyl]-alpha-D-glucosamine + a (3R)-hydroxyacyl-[ACP] = a UDP-2-N,3-O-bis[(3R)-3-hydroxyacyl]-alpha-D-glucosamine + holo-[ACP] + H(+). It participates in bacterial outer membrane biogenesis; LPS lipid A biosynthesis. Functionally, catalyzes the N-acylation of UDP-3-O-acylglucosamine using 3-hydroxyacyl-ACP as the acyl donor. Is involved in the biosynthesis of lipid A, a phosphorylated glycolipid that anchors the lipopolysaccharide to the outer membrane of the cell. The protein is UDP-3-O-acylglucosamine N-acyltransferase of Synechocystis sp. (strain ATCC 27184 / PCC 6803 / Kazusa).